An 842-amino-acid polypeptide reads, in one-letter code: TATA box-binding protein-associated factor, RNA polymerase I, subunit C (842 aa).

Disordered regions lie at residues 574-605, 667-690, and 702-842; these read SSLREPDHPAPERPASRAAAPPVDQGSTPSWT, RPGDLGTLPKAEPPPAPQCSQQDE, and QAAA…RMGF. Positions 577-588 are enriched in basic and acidic residues; the sequence is REPDHPAPERPA. Polar residues predominate over residues 745-760; sequence DASSAPHSQDLSNSEA. Residues 783 to 794 are compositionally biased toward basic and acidic residues; it reads QHERRQTLRDYM. At Thr-808 the chain carries Phosphothreonine. Positions 809 to 826 are enriched in low complexity; it reads PPSQTSSRQTRSFRQQTP. The segment covering 833-842 has biased composition (basic residues); it reads PPRKKPRMGF.

As to quaternary structure, component of the transcription factor SL1/TIF-IB complex, composed of TBP and at least TAF1A, TAF1B, TAF1C and TAF1D. In the complex interacts directly with TBP, TAF1A and TAF1B. Interaction of the SL1/TIF-IB subunits with TBP excludes interaction of TBP with the transcription factor IID (TFIID) subunits. Interacts with MYC and RRN3. Interacts with p53/TP53; the interaction prevents the association of SL1/TIF-IB with UBTF and represses RNA polymerase I transcription. Part of Pol I pre-initiation complex (PIC), in which Pol I core assembles with RRN3 and promoter-bound UTBF and SL1/TIF-IB complex.

The protein resides in the nucleus. The protein localises to the nucleolus. Functionally, component of the transcription factor SL1/TIF-IB complex, which is involved in the assembly of the PIC (pre-initiation complex) during RNA polymerase I-dependent transcription. The rate of PIC formation probably is primarily dependent on the rate of association of SL1/TIF-IB with the rDNA promoter. SL1/TIF-IB is involved in stabilization of nucleolar transcription factor 1/UBTF on rDNA. Formation of SL1/TIF-IB excludes the association of TBP with TFIID subunits. Recruits RNA polymerase I to the rRNA gene promoter via interaction with RRN3. This chain is TATA box-binding protein-associated factor, RNA polymerase I, subunit C (Taf1c), found in Rattus norvegicus (Rat).